We begin with the raw amino-acid sequence, 352 residues long: Quinolinate synthase (352 aa).

Residues histidine 48 and serine 69 each coordinate iminosuccinate. Cysteine 114 contributes to the [4Fe-4S] cluster binding site. Iminosuccinate contacts are provided by residues 140–142 (YAN) and serine 157. A [4Fe-4S] cluster-binding site is contributed by cysteine 201. Residues 227–229 (HPE) and threonine 244 contribute to the iminosuccinate site. Cysteine 298 is a binding site for [4Fe-4S] cluster.

This sequence belongs to the quinolinate synthase family. Type 1 subfamily. Requires [4Fe-4S] cluster as cofactor.

Its subcellular location is the cytoplasm. It catalyses the reaction iminosuccinate + dihydroxyacetone phosphate = quinolinate + phosphate + 2 H2O + H(+). Its pathway is cofactor biosynthesis; NAD(+) biosynthesis; quinolinate from iminoaspartate: step 1/1. Catalyzes the condensation of iminoaspartate with dihydroxyacetone phosphate to form quinolinate. This is Quinolinate synthase from Pseudomonas aeruginosa (strain UCBPP-PA14).